We begin with the raw amino-acid sequence, 197 residues long: Potassium-transporting ATPase KdpC subunit (197 aa).

The chain crosses the membrane as a helical span at residues 7-27; that stretch reads PALVSMGLFTVLLGLAYPLAV.

This sequence belongs to the KdpC family. The system is composed of three essential subunits: KdpA, KdpB and KdpC.

The protein localises to the cell inner membrane. In terms of biological role, part of the high-affinity ATP-driven potassium transport (or Kdp) system, which catalyzes the hydrolysis of ATP coupled with the electrogenic transport of potassium into the cytoplasm. This subunit acts as a catalytic chaperone that increases the ATP-binding affinity of the ATP-hydrolyzing subunit KdpB by the formation of a transient KdpB/KdpC/ATP ternary complex. This Caulobacter vibrioides (strain ATCC 19089 / CIP 103742 / CB 15) (Caulobacter crescentus) protein is Potassium-transporting ATPase KdpC subunit.